An 886-amino-acid polypeptide reads, in one-letter code: Alanine--tRNA ligase (886 aa).

Residues H564, H568, C676, and H680 each contribute to the Zn(2+) site.

The protein belongs to the class-II aminoacyl-tRNA synthetase family. The cofactor is Zn(2+).

The protein resides in the cytoplasm. The catalysed reaction is tRNA(Ala) + L-alanine + ATP = L-alanyl-tRNA(Ala) + AMP + diphosphate. In terms of biological role, catalyzes the attachment of alanine to tRNA(Ala) in a two-step reaction: alanine is first activated by ATP to form Ala-AMP and then transferred to the acceptor end of tRNA(Ala). Also edits incorrectly charged Ser-tRNA(Ala) and Gly-tRNA(Ala) via its editing domain. The protein is Alanine--tRNA ligase of Bartonella bacilliformis.